Here is a 226-residue protein sequence, read N- to C-terminus: Translation initiation factor IF-3 (226 aa).

The interval 195 to 226 (FVPLAPLSPEDLIEEPELESESDSDAEPESDN) is disordered. The segment covering 205 to 226 (DLIEEPELESESDSDAEPESDN) has biased composition (acidic residues).

This sequence belongs to the IF-3 family. In terms of assembly, monomer.

It localises to the cytoplasm. Its function is as follows. IF-3 binds to the 30S ribosomal subunit and shifts the equilibrium between 70S ribosomes and their 50S and 30S subunits in favor of the free subunits, thus enhancing the availability of 30S subunits on which protein synthesis initiation begins. In Chlorobium chlorochromatii (strain CaD3), this protein is Translation initiation factor IF-3.